Reading from the N-terminus, the 681-residue chain is Cell cycle checkpoint protein RAD17 (681 aa).

Positions 17–25 (DWVDPSFDD) match the RAD1-binding motif motif. Positions 42–61 (VNNSSHRRKNGPSTLESSRF) are disordered. Residue T55 is modified to Phosphothreonine. Residues S71 and S86 each carry the phosphoserine modification. 137–144 (GPPGCGKT) contacts ATP. Disordered stretches follow at residues 344-377 (SSKG…KPDR) and 606-681 (HGMI…SDGT). S359 is subject to Phosphoserine. Residues 432–681 (LVEPEEVVEM…IIEDYESDGT (250 aa)) are interaction with MCM7. Residues 631–662 (EPTQATVPETWSLPLSQNSASELPASQPQPFS) are compositionally biased toward polar residues. The residue at position 633 (T633) is a Phosphothreonine; by ATM. Phosphoserine; by ATR and ATM is present on residues S646 and S656. A compositionally biased stretch (acidic residues) spans 666-681 (DMEENIIIEDYESDGT).

Belongs to the rad17/RAD24 family. In terms of assembly, part of a DNA-binding complex containing RFC2, RFC3, RFC4 and RFC5. Interacts with RAD1 and RAD9 within the 9-1-1 (RAD1-RAD9-HUS1) complex. Interacts with RAD9B, POLE, SNU13 and MCM7. DNA damage promotes interaction with ATR or ATM and disrupts interaction with the 9-1-1 (RAD1-RAD9-HUS1) complex. Interacts (when phosphorylated) with NBN; promoting recruitment of the MRN complex to DNA damage sites. Post-translationally, phosphorylation on Ser-646 and Ser-656 is cell cycle-regulated, enhanced by genotoxic stress, and required for activation of checkpoint signaling. Phosphorylation is mediated by ATR upon UV or replication arrest, whereas it may be mediated both by ATR and ATM upon ionizing radiation. Phosphorylation on both sites is required for interaction with RAD1 but dispensable for interaction with RFC3 or RFC4. Phosphorylation at Thr-633 by ATM in response to DNA damage promotes interaction with NBN and recruitment of the MRN complex to DNA damage sites. Overexpressed in various cancer cell lines and in colon carcinoma (at protein level). Isoform 2 and isoform 3 are the most abundant isoforms in non irradiated cells (at protein level). Ubiquitous at low levels. Highly expressed in testis, where it is expressed within the germinal epithelium of the seminiferous tubuli. Weakly expressed in seminomas (testicular tumors).

The protein localises to the nucleus. The protein resides in the chromosome. Functionally, essential for sustained cell growth, maintenance of chromosomal stability, and ATR-dependent checkpoint activation upon DNA damage. Has a weak ATPase activity required for binding to chromatin. Participates in the recruitment of the 9-1-1 (RAD1-RAD9-HUS1) complex and RHNO1 onto chromatin, and in CHEK1 activation. Involved in homologous recombination by mediating recruitment of the MRN complex to DNA damage sites. May also serve as a sensor of DNA replication progression. The chain is Cell cycle checkpoint protein RAD17 from Homo sapiens (Human).